A 444-amino-acid chain; its full sequence is CCA-adding enzyme (444 aa).

ATP is bound by residues serine 57 and arginine 60. Serine 57 and arginine 60 together coordinate CTP. Mg(2+) contacts are provided by aspartate 69, aspartate 71, and aspartate 124. Residues histidine 147, lysine 168, and tyrosine 177 each coordinate ATP. CTP is bound by residues histidine 147, lysine 168, and tyrosine 177.

Belongs to the tRNA nucleotidyltransferase/poly(A) polymerase family. Archaeal CCA-adding enzyme subfamily. In terms of assembly, homodimer. It depends on Mg(2+) as a cofactor.

The enzyme catalyses a tRNA precursor + 2 CTP + ATP = a tRNA with a 3' CCA end + 3 diphosphate. It catalyses the reaction a tRNA with a 3' CCA end + 2 CTP + ATP = a tRNA with a 3' CCACCA end + 3 diphosphate. Its function is as follows. Catalyzes the addition and repair of the essential 3'-terminal CCA sequence in tRNAs without using a nucleic acid template. Adds these three nucleotides in the order of C, C, and A to the tRNA nucleotide-73, using CTP and ATP as substrates and producing inorganic pyrophosphate. tRNA 3'-terminal CCA addition is required both for tRNA processing and repair. Also involved in tRNA surveillance by mediating tandem CCA addition to generate a CCACCA at the 3' terminus of unstable tRNAs. While stable tRNAs receive only 3'-terminal CCA, unstable tRNAs are marked with CCACCA and rapidly degraded. The chain is CCA-adding enzyme from Methanococcus maripaludis (strain DSM 14266 / JCM 13030 / NBRC 101832 / S2 / LL).